The chain runs to 573 residues: Chromosomal replication initiator protein DnaA (573 aa).

Residues M1 to R85 form a domain I, interacts with DnaA modulators region. Residues R85–V231 form a domain II region. Positions V91–S232 are disordered. Residues P116–Q169 show a composition bias toward low complexity. A compositionally biased stretch (polar residues) spans Q178 to S191. Over residues S202–A213 the composition is skewed to pro residues. The interval S232 to S448 is domain III, AAA+ region. Residues G276, G278, K279, and T280 each coordinate ATP. The tract at residues S449–N573 is domain IV, binds dsDNA.

The protein belongs to the DnaA family. Oligomerizes as a right-handed, spiral filament on DNA at oriC.

It localises to the cytoplasm. Its function is as follows. Plays an essential role in the initiation and regulation of chromosomal replication. ATP-DnaA binds to the origin of replication (oriC) to initiate formation of the DNA replication initiation complex once per cell cycle. Binds the DnaA box (a 9 base pair repeat at the origin) and separates the double-stranded (ds)DNA. Forms a right-handed helical filament on oriC DNA; dsDNA binds to the exterior of the filament while single-stranded (ss)DNA is stabiized in the filament's interior. The ATP-DnaA-oriC complex binds and stabilizes one strand of the AT-rich DNA unwinding element (DUE), permitting loading of DNA polymerase. After initiation quickly degrades to an ADP-DnaA complex that is not apt for DNA replication. Binds acidic phospholipids. This is Chromosomal replication initiator protein DnaA from Corynebacterium efficiens (strain DSM 44549 / YS-314 / AJ 12310 / JCM 11189 / NBRC 100395).